Reading from the N-terminus, the 61-residue chain is Small ribosomal subunit protein uS14 (61 aa).

Cysteine 24, cysteine 27, cysteine 40, and cysteine 43 together coordinate Zn(2+).

Belongs to the universal ribosomal protein uS14 family. Zinc-binding uS14 subfamily. Part of the 30S ribosomal subunit. Contacts proteins S3 and S10. The cofactor is Zn(2+).

Binds 16S rRNA, required for the assembly of 30S particles and may also be responsible for determining the conformation of the 16S rRNA at the A site. This Nitratidesulfovibrio vulgaris (strain DSM 19637 / Miyazaki F) (Desulfovibrio vulgaris) protein is Small ribosomal subunit protein uS14.